The sequence spans 127 residues: Lysozyme C (127 aa).

The C-type lysozyme domain maps to 1–127 (KDIPRCELVK…KDLSSYVRGC (127 aa)). 4 cysteine pairs are disulfide-bonded: Cys-6–Cys-127, Cys-30–Cys-115, Cys-64–Cys-80, and Cys-76–Cys-94. Catalysis depends on residues Glu-35 and Asp-52. Ca(2+) contacts are provided by Lys-82, Asp-85, Asn-87, Asp-90, and Asp-91.

It belongs to the glycosyl hydrolase 22 family. In terms of assembly, monomer. Ca(2+) serves as cofactor.

It localises to the secreted. It carries out the reaction Hydrolysis of (1-&gt;4)-beta-linkages between N-acetylmuramic acid and N-acetyl-D-glucosamine residues in a peptidoglycan and between N-acetyl-D-glucosamine residues in chitodextrins.. Its function is as follows. Lysozymes have primarily a bacteriolytic function; those in tissues and body fluids are associated with the monocyte-macrophage system and enhance the activity of immunoagents. The protein is Lysozyme C (LYZ) of Columba livia (Rock dove).